The following is a 151-amino-acid chain: 3-dehydroquinate dehydratase (151 aa).

Y24 acts as the Proton acceptor in catalysis. The substrate site is built by N76, H82, and D89. Catalysis depends on H102, which acts as the Proton donor. Substrate-binding positions include 103 to 104 (VS) and R113.

Belongs to the type-II 3-dehydroquinase family. As to quaternary structure, homododecamer.

It catalyses the reaction 3-dehydroquinate = 3-dehydroshikimate + H2O. Its pathway is metabolic intermediate biosynthesis; chorismate biosynthesis; chorismate from D-erythrose 4-phosphate and phosphoenolpyruvate: step 3/7. Its function is as follows. Catalyzes a trans-dehydration via an enolate intermediate. In Rhodopseudomonas palustris (strain HaA2), this protein is 3-dehydroquinate dehydratase.